The following is a 110-amino-acid chain: Large ribosomal subunit protein uL22 (110 aa).

It belongs to the universal ribosomal protein uL22 family. In terms of assembly, part of the 50S ribosomal subunit.

Its function is as follows. This protein binds specifically to 23S rRNA; its binding is stimulated by other ribosomal proteins, e.g. L4, L17, and L20. It is important during the early stages of 50S assembly. It makes multiple contacts with different domains of the 23S rRNA in the assembled 50S subunit and ribosome. In terms of biological role, the globular domain of the protein is located near the polypeptide exit tunnel on the outside of the subunit, while an extended beta-hairpin is found that lines the wall of the exit tunnel in the center of the 70S ribosome. This is Large ribosomal subunit protein uL22 from Acinetobacter baylyi (strain ATCC 33305 / BD413 / ADP1).